The chain runs to 100 residues: UPF0125 protein CV_3462 (100 aa).

This sequence belongs to the UPF0125 (RnfH) family.

This is UPF0125 protein CV_3462 from Chromobacterium violaceum (strain ATCC 12472 / DSM 30191 / JCM 1249 / CCUG 213 / NBRC 12614 / NCIMB 9131 / NCTC 9757 / MK).